Consider the following 433-residue polypeptide: Glutamate-1-semialdehyde 2,1-aminomutase (433 aa).

Position 272 is an N6-(pyridoxal phosphate)lysine (Lys272).

Belongs to the class-III pyridoxal-phosphate-dependent aminotransferase family. HemL subfamily. In terms of assembly, homodimer. Requires pyridoxal 5'-phosphate as cofactor.

It is found in the cytoplasm. The enzyme catalyses (S)-4-amino-5-oxopentanoate = 5-aminolevulinate. Its pathway is porphyrin-containing compound metabolism; protoporphyrin-IX biosynthesis; 5-aminolevulinate from L-glutamyl-tRNA(Glu): step 2/2. The polypeptide is Glutamate-1-semialdehyde 2,1-aminomutase (Magnetococcus marinus (strain ATCC BAA-1437 / JCM 17883 / MC-1)).